The following is a 100-amino-acid chain: Urease subunit gamma (100 aa).

Belongs to the urease gamma subunit family. As to quaternary structure, heterotrimer of UreA (gamma), UreB (beta) and UreC (alpha) subunits. Three heterotrimers associate to form the active enzyme.

It is found in the cytoplasm. The enzyme catalyses urea + 2 H2O + H(+) = hydrogencarbonate + 2 NH4(+). Its pathway is nitrogen metabolism; urea degradation; CO(2) and NH(3) from urea (urease route): step 1/1. The chain is Urease subunit gamma from Agrobacterium fabrum (strain C58 / ATCC 33970) (Agrobacterium tumefaciens (strain C58)).